Consider the following 176-residue polypeptide: ATP-dependent protease subunit HslV (176 aa).

T5 is an active-site residue. Na(+) contacts are provided by G161, C164, and T167.

The protein belongs to the peptidase T1B family. HslV subfamily. As to quaternary structure, a double ring-shaped homohexamer of HslV is capped on each side by a ring-shaped HslU homohexamer. The assembly of the HslU/HslV complex is dependent on binding of ATP.

It localises to the cytoplasm. It catalyses the reaction ATP-dependent cleavage of peptide bonds with broad specificity.. With respect to regulation, allosterically activated by HslU binding. Functionally, protease subunit of a proteasome-like degradation complex believed to be a general protein degrading machinery. In Sulfurovum sp. (strain NBC37-1), this protein is ATP-dependent protease subunit HslV.